The primary structure comprises 696 residues: DNA ligase (696 aa).

NAD(+) is bound by residues 36 to 40 (DAEYD), 85 to 86 (SL), and glutamate 123. Catalysis depends on lysine 125, which acts as the N6-AMP-lysine intermediate. Residues arginine 146, glutamate 181, lysine 319, and lysine 343 each coordinate NAD(+). Cysteine 437, cysteine 440, cysteine 455, and cysteine 461 together coordinate Zn(2+). A BRCT domain is found at 618-696 (PEGTSLAGKT…EDGLKALLGL (79 aa)).

The protein belongs to the NAD-dependent DNA ligase family. LigA subfamily. It depends on Mg(2+) as a cofactor. Requires Mn(2+) as cofactor.

The enzyme catalyses NAD(+) + (deoxyribonucleotide)n-3'-hydroxyl + 5'-phospho-(deoxyribonucleotide)m = (deoxyribonucleotide)n+m + AMP + beta-nicotinamide D-nucleotide.. Functionally, DNA ligase that catalyzes the formation of phosphodiester linkages between 5'-phosphoryl and 3'-hydroxyl groups in double-stranded DNA using NAD as a coenzyme and as the energy source for the reaction. It is essential for DNA replication and repair of damaged DNA. The chain is DNA ligase from Bordetella bronchiseptica (strain ATCC BAA-588 / NCTC 13252 / RB50) (Alcaligenes bronchisepticus).